The sequence spans 274 residues: tRNA (cytosine(48)-C(5))-methyltransferase (274 aa).

S-adenosyl-L-methionine-binding positions include C91–K97, E115, R120, D142, D163, N169, and R189. C212 functions as the Nucleophile in the catalytic mechanism.

This sequence belongs to the class I-like SAM-binding methyltransferase superfamily. RsmB/NOP family.

It localises to the cytoplasm. It carries out the reaction cytidine(48) in tRNA precursor + S-adenosyl-L-methionine = 5-methylcytidine(48) in tRNA precursor + S-adenosyl-L-homocysteine + H(+). The catalysed reaction is cytidine(40) in tRNA precursor + S-adenosyl-L-methionine = 5-methylcytidine(40) in tRNA precursor + S-adenosyl-L-homocysteine + H(+). Its function is as follows. Catalyzes AdoMet-dependent formation of m5C in tRNA. Cytidine residue at either position 40 or position 48 is likely to be methylated. The polypeptide is tRNA (cytosine(48)-C(5))-methyltransferase (trm4) (Methanocaldococcus jannaschii (strain ATCC 43067 / DSM 2661 / JAL-1 / JCM 10045 / NBRC 100440) (Methanococcus jannaschii)).